We begin with the raw amino-acid sequence, 409 residues long: Proteasome-activating nucleotidase (409 aa).

A disordered region spans residues 1–22; the sequence is MTLSSAGGSRSHRHNGGHSERD. Positions 23-58 form a coiled coil; the sequence is VEIRILKDKVRSLTKEKISLQKELEYYKNEITKLLS. ATP contacts are provided by residues 183–188 and His322; that span reads GTGKTL.

This sequence belongs to the AAA ATPase family. Homohexamer. The hexameric complex has a two-ring architecture resembling a top hat that caps the 20S proteasome core at one or both ends. Upon ATP-binding, the C-terminus of PAN interacts with the alpha-rings of the proteasome core by binding to the intersubunit pockets.

The protein localises to the cytoplasm. ATPase which is responsible for recognizing, binding, unfolding and translocation of substrate proteins into the archaeal 20S proteasome core particle. Is essential for opening the gate of the 20S proteasome via an interaction with its C-terminus, thereby allowing substrate entry and access to the site of proteolysis. Thus, the C-termini of the proteasomal ATPase function like a 'key in a lock' to induce gate opening and therefore regulate proteolysis. Unfolding activity requires energy from ATP hydrolysis, whereas ATP binding alone promotes ATPase-20S proteasome association which triggers gate opening, and supports translocation of unfolded substrates. This chain is Proteasome-activating nucleotidase, found in Aeropyrum pernix (strain ATCC 700893 / DSM 11879 / JCM 9820 / NBRC 100138 / K1).